The sequence spans 493 residues: Cobyric acid synthase (493 aa).

Residues 252-441 enclose the GATase cobBQ-type domain; that stretch reads DLKITVIRLP…LHGLLENGPW (190 aa). Cys333 serves as the catalytic Nucleophile. His433 is a catalytic residue.

This sequence belongs to the CobB/CobQ family. CobQ subfamily.

It functions in the pathway cofactor biosynthesis; adenosylcobalamin biosynthesis. Catalyzes amidations at positions B, D, E, and G on adenosylcobyrinic A,C-diamide. NH(2) groups are provided by glutamine, and one molecule of ATP is hydrogenolyzed for each amidation. The chain is Cobyric acid synthase from Thermosynechococcus vestitus (strain NIES-2133 / IAM M-273 / BP-1).